The sequence spans 1287 residues: SCL-interrupting locus protein (1287 aa).

Residue methionine 1 is modified to N-acetylmethionine. An interaction with RBM14 region spans residues 1 to 1018 (MEPIYPFARP…IDSPTKVKKN (1018 aa)). An interaction with CPAP region spans residues 231-781 (YKYGYLTMDE…VSVEAQSSPG (551 aa)). Disordered stretches follow at residues 378–417 (RSSQ…SQKI) and 508–533 (PPAY…PSHD). Serine 395 bears the Phosphoserine mark. Residues 517-529 (HTRNSIKPSSHNG) are compositionally biased toward polar residues. The tract at residues 584-779 (PMELQIPTPP…ELVSVEAQSS (196 aa)) is PIN1-binding. 3 positions are modified to phosphoserine: serine 753, serine 779, and serine 1135.

As to quaternary structure, homodimer. Interacts with PIN1 via its WW domain. This interaction is dependent on STIL mitotic phosphorylation. Interacts with CPAP. Interacts with RBM14 and this interaction interferes with the interaction of STIL with CPAP. Forms a complex with CPAP and SASS6. Interacts (via N-terminus) with CEP85; this interaction is essential for efficient centriolar targeting of STIL and subsequent PLK4 activation. Post-translationally, ubiquitinated. Phosphorylated following the activation of the mitotic checkpoint. In terms of tissue distribution, expressed in all hematopoietic tissues and cell lines. Highly expressed in a variety of tumors characterized by increased mitotic activity with highest expression in lung cancer.

Its subcellular location is the cytoplasm. It is found in the cytosol. The protein resides in the cytoskeleton. The protein localises to the microtubule organizing center. It localises to the centrosome. Its subcellular location is the centriole. It is found in the cell cortex. Its function is as follows. Immediate-early gene. Plays an important role in embryonic development as well as in cellular growth and proliferation; its long-term silencing affects cell survival and cell cycle distribution as well as decreases CDK1 activity correlated with reduced phosphorylation of CDK1. Plays a role as a positive regulator of the sonic hedgehog pathway, acting downstream of PTCH1. Plays an important role in the regulation of centriole duplication. Required for the onset of procentriole formation and proper mitotic progression. During procentriole formation, is essential for the correct loading of SASS6 and CPAP to the base of the procentriole to initiate procentriole assembly. In complex with STIL acts as a modulator of PLK4-driven cytoskeletal rearrangements and directional cell motility. This is SCL-interrupting locus protein (STIL) from Homo sapiens (Human).